We begin with the raw amino-acid sequence, 116 residues long: Iron-sulfur cluster insertion protein ErpA (116 aa).

Iron-sulfur cluster is bound by residues Cys-44, Cys-108, and Cys-110.

It belongs to the HesB/IscA family. As to quaternary structure, homodimer. Requires iron-sulfur cluster as cofactor.

Its function is as follows. Required for insertion of 4Fe-4S clusters for at least IspG. The protein is Iron-sulfur cluster insertion protein ErpA of Aeromonas hydrophila subsp. hydrophila (strain ATCC 7966 / DSM 30187 / BCRC 13018 / CCUG 14551 / JCM 1027 / KCTC 2358 / NCIMB 9240 / NCTC 8049).